The sequence spans 180 residues: Crossover junction endodeoxyribonuclease RuvC (180 aa).

Catalysis depends on residues Asp7, Glu66, and Asp138. Mg(2+)-binding residues include Asp7, Glu66, and Asp138.

This sequence belongs to the RuvC family. In terms of assembly, homodimer which binds Holliday junction (HJ) DNA. The HJ becomes 2-fold symmetrical on binding to RuvC with unstacked arms; it has a different conformation from HJ DNA in complex with RuvA. In the full resolvosome a probable DNA-RuvA(4)-RuvB(12)-RuvC(2) complex forms which resolves the HJ. Requires Mg(2+) as cofactor.

The protein resides in the cytoplasm. The catalysed reaction is Endonucleolytic cleavage at a junction such as a reciprocal single-stranded crossover between two homologous DNA duplexes (Holliday junction).. The RuvA-RuvB-RuvC complex processes Holliday junction (HJ) DNA during genetic recombination and DNA repair. Endonuclease that resolves HJ intermediates. Cleaves cruciform DNA by making single-stranded nicks across the HJ at symmetrical positions within the homologous arms, yielding a 5'-phosphate and a 3'-hydroxyl group; requires a central core of homology in the junction. The consensus cleavage sequence is 5'-(A/T)TT(C/G)-3'. Cleavage occurs on the 3'-side of the TT dinucleotide at the point of strand exchange. HJ branch migration catalyzed by RuvA-RuvB allows RuvC to scan DNA until it finds its consensus sequence, where it cleaves and resolves the cruciform DNA. This is Crossover junction endodeoxyribonuclease RuvC from Burkholderia orbicola (strain AU 1054).